A 341-amino-acid polypeptide reads, in one-letter code: L-threonine 3-dehydrogenase (341 aa).

Zn(2+) is bound at residue Cys-38. Residues Thr-40 and His-43 each act as charge relay system in the active site. Zn(2+) contacts are provided by His-63, Glu-64, Cys-93, Cys-96, Cys-99, and Cys-107. Residues Ile-175, Asp-195, Arg-200, 262-264 (LGI), and 286-287 (IY) each bind NAD(+).

It belongs to the zinc-containing alcohol dehydrogenase family. Homotetramer. Zn(2+) serves as cofactor.

The protein localises to the cytoplasm. It catalyses the reaction L-threonine + NAD(+) = (2S)-2-amino-3-oxobutanoate + NADH + H(+). Its pathway is amino-acid degradation; L-threonine degradation via oxydo-reductase pathway; glycine from L-threonine: step 1/2. Functionally, catalyzes the NAD(+)-dependent oxidation of L-threonine to 2-amino-3-ketobutyrate. This chain is L-threonine 3-dehydrogenase, found in Klebsiella pneumoniae subsp. pneumoniae (strain ATCC 700721 / MGH 78578).